The sequence spans 248 residues: ATP synthase subunit a (248 aa).

The next 6 membrane-spanning stretches (helical) occupy residues 34-54 (TNVTLWMALAVAAIALLLVAG), 91-111 (YFPYIFTLFMFILVANFLGLI), 121-141 (IAVTAVLALAVFITVTVIGFV), 147-167 (FLSLFWVASAPLALRPILAVI), 197-217 (FAGFAQVAAVAPIAIIGVMAI), and 220-240 (LEVLVSAIQAYVFTILTCVYL).

The protein belongs to the ATPase A chain family. In terms of assembly, F-type ATPases have 2 components, CF(1) - the catalytic core - and CF(0) - the membrane proton channel. CF(1) has five subunits: alpha(3), beta(3), gamma(1), delta(1), epsilon(1). CF(0) has four main subunits: a, b, b' and c.

It localises to the cell inner membrane. In terms of biological role, key component of the proton channel; it plays a direct role in the translocation of protons across the membrane. The polypeptide is ATP synthase subunit a (Dinoroseobacter shibae (strain DSM 16493 / NCIMB 14021 / DFL 12)).